Here is a 504-residue protein sequence, read N- to C-terminus: Maturase K (504 aa).

This sequence belongs to the intron maturase 2 family. MatK subfamily.

It localises to the plastid. The protein localises to the chloroplast. In terms of biological role, usually encoded in the trnK tRNA gene intron. Probably assists in splicing its own and other chloroplast group II introns. This chain is Maturase K, found in Olimarabidopsis pumila (Dwarf rocket).